Consider the following 326-residue polypeptide: Putative HTH-type transcriptional regulatory protein MMP0678 (326 aa).

The HTH cro/C1-type domain occupies 128–183 (LRETREKLKISVGELAEVSRVSRKTIYKYEQNEANPSAEVAIKIEEYLDVPLIKGI). Residues 139 to 158 (VGELAEVSRVSRKTIYKYEQ) constitute a DNA-binding region (H-T-H motif).

In Methanococcus maripaludis (strain DSM 14266 / JCM 13030 / NBRC 101832 / S2 / LL), this protein is Putative HTH-type transcriptional regulatory protein MMP0678.